A 263-amino-acid polypeptide reads, in one-letter code: uncharacterized protein (263 aa).

The interval 183–263 (APHDRPEGVP…PPSTNTKGAA (81 aa)) is disordered. 2 stretches are compositionally biased toward polar residues: residues 230-239 (SRPTAPSRPS) and 253-263 (TPPSTNTKGAA).

Functionally, probably does not play a direct role in plasmid integration or excision. This is an uncharacterized protein from Saccharopolyspora erythraea (Streptomyces erythraeus).